We begin with the raw amino-acid sequence, 79 residues long: Sulfur carrier protein TusA (79 aa).

Catalysis depends on C17, which acts as the Cysteine persulfide intermediate.

It belongs to the sulfur carrier protein TusA family.

It is found in the cytoplasm. Sulfur carrier protein which probably makes part of a sulfur-relay system. This chain is Sulfur carrier protein TusA, found in Pseudoalteromonas translucida (strain TAC 125).